Reading from the N-terminus, the 370-residue chain is Phospho-N-acetylmuramoyl-pentapeptide-transferase (370 aa).

The next 10 membrane-spanning stretches (helical) occupy residues Ala29 to Leu49, Gly70 to Trp90, Leu93 to Phe113, Lys133 to Gly153, Gly177 to Ser197, Gly209 to Ser229, Val251 to Ala271, Val273 to Met293, Ile298 to Val318, and Val349 to Ile369.

This sequence belongs to the glycosyltransferase 4 family. MraY subfamily. Mg(2+) is required as a cofactor.

The protein resides in the cell inner membrane. It catalyses the reaction UDP-N-acetyl-alpha-D-muramoyl-L-alanyl-gamma-D-glutamyl-meso-2,6-diaminopimeloyl-D-alanyl-D-alanine + di-trans,octa-cis-undecaprenyl phosphate = di-trans,octa-cis-undecaprenyl diphospho-N-acetyl-alpha-D-muramoyl-L-alanyl-D-glutamyl-meso-2,6-diaminopimeloyl-D-alanyl-D-alanine + UMP. It functions in the pathway cell wall biogenesis; peptidoglycan biosynthesis. Catalyzes the initial step of the lipid cycle reactions in the biosynthesis of the cell wall peptidoglycan: transfers peptidoglycan precursor phospho-MurNAc-pentapeptide from UDP-MurNAc-pentapeptide onto the lipid carrier undecaprenyl phosphate, yielding undecaprenyl-pyrophosphoryl-MurNAc-pentapeptide, known as lipid I. The protein is Phospho-N-acetylmuramoyl-pentapeptide-transferase of Leptospira biflexa serovar Patoc (strain Patoc 1 / Ames).